Here is a 94-residue protein sequence, read N- to C-terminus: Large ribosomal subunit protein uL23cz (94 aa).

Belongs to the universal ribosomal protein uL23 family. Part of the 50S ribosomal subunit.

Its subcellular location is the plastid. It is found in the chloroplast. In terms of biological role, binds to 23S rRNA. This Agrostis stolonifera (Creeping bentgrass) protein is Large ribosomal subunit protein uL23cz (rpl23-A).